The following is a 195-amino-acid chain: Glycerol-3-phosphate acyltransferase (195 aa).

The next 5 membrane-spanning stretches (helical) occupy residues 7-27 (IFIL…SYVI), 52-72 (LALL…AIAQ), 80-100 (ILFL…YLFF), 113-133 (LIFI…ICFL), and 147-167 (LIAL…IFTI).

This sequence belongs to the PlsY family. Probably interacts with PlsX.

Its subcellular location is the cell inner membrane. It catalyses the reaction an acyl phosphate + sn-glycerol 3-phosphate = a 1-acyl-sn-glycero-3-phosphate + phosphate. The protein operates within lipid metabolism; phospholipid metabolism. In terms of biological role, catalyzes the transfer of an acyl group from acyl-phosphate (acyl-PO(4)) to glycerol-3-phosphate (G3P) to form lysophosphatidic acid (LPA). This enzyme utilizes acyl-phosphate as fatty acyl donor, but not acyl-CoA or acyl-ACP. This chain is Glycerol-3-phosphate acyltransferase, found in Ehrlichia ruminantium (strain Welgevonden).